A 507-amino-acid polypeptide reads, in one-letter code: Cytochrome P450 4X1 (507 aa).

The chain crosses the membrane as a helical span at residues 14 to 34 (LHLALVFCLALVLMQAVKLYL). A heme-binding site is contributed by cysteine 452.

The protein belongs to the cytochrome P450 family. Heme serves as cofactor. Expressed at high levels in brain, mainly in neurons in different regions, including brain stem, hippocampus, cortex and cerebellum. Also expressed in cerebral vasculature. Not detected in kidney, nor liver.

It is found in the endoplasmic reticulum membrane. Its subcellular location is the microsome membrane. It carries out the reaction N-(5Z,8Z,11Z,14Z-eicosatetraenoyl)-ethanolamine + reduced [NADPH--hemoprotein reductase] + O2 = N-(14,15-epoxy-5Z,8Z,11Z-eicosatrienoyl)-ethanolamine + oxidized [NADPH--hemoprotein reductase] + H2O + H(+). A cytochrome P450 monooxygenase that selectively catalyzes the epoxidation of the last double bond of the arachidonoyl moiety of anandamide, potentially modulating endocannabinoid signaling. Has no hydroxylase activity toward various fatty acids, steroids and prostaglandins. Mechanistically, uses molecular oxygen inserting one oxygen atom into a substrate, and reducing the second into a water molecule, with two electrons provided by NADPH via cytochrome P450 reductase (CPR; NADPH-ferrihemoprotein reductase). The protein is Cytochrome P450 4X1 of Rattus norvegicus (Rat).